The following is a 421-amino-acid chain: Signal recognition particle receptor FtsY (421 aa).

Over residues 1 to 10 the composition is skewed to basic residues; the sequence is MFSFFRRKKK. The disordered stretch occupies residues 1 to 31; that stretch reads MFSFFRRKKKQETPALEEAQIQETAAKAESE. GTP is bound by residues 228 to 235, 309 to 313, and 373 to 376; these read GINGAGKT, DTAGR, and TKLD.

Belongs to the GTP-binding SRP family. FtsY subfamily. Part of the signal recognition particle protein translocation system, which is composed of SRP and FtsY. SRP is a ribonucleoprotein composed of Ffh and a 4.5S RNA molecule.

It localises to the cell inner membrane. It is found in the cytoplasm. It carries out the reaction GTP + H2O = GDP + phosphate + H(+). In terms of biological role, involved in targeting and insertion of nascent membrane proteins into the cytoplasmic membrane. Acts as a receptor for the complex formed by the signal recognition particle (SRP) and the ribosome-nascent chain (RNC). Interaction with SRP-RNC leads to the transfer of the RNC complex to the Sec translocase for insertion into the membrane, the hydrolysis of GTP by both Ffh and FtsY, and the dissociation of the SRP-FtsY complex into the individual components. This Neisseria meningitidis serogroup A / serotype 4A (strain DSM 15465 / Z2491) protein is Signal recognition particle receptor FtsY.